We begin with the raw amino-acid sequence, 189 residues long: Probable nicotinate-nucleotide adenylyltransferase (189 aa).

The protein belongs to the NadD family.

It catalyses the reaction nicotinate beta-D-ribonucleotide + ATP + H(+) = deamido-NAD(+) + diphosphate. The protein operates within cofactor biosynthesis; NAD(+) biosynthesis; deamido-NAD(+) from nicotinate D-ribonucleotide: step 1/1. Its function is as follows. Catalyzes the reversible adenylation of nicotinate mononucleotide (NaMN) to nicotinic acid adenine dinucleotide (NaAD). This chain is Probable nicotinate-nucleotide adenylyltransferase, found in Hydrogenobaculum sp. (strain Y04AAS1).